A 166-amino-acid polypeptide reads, in one-letter code: Large ribosomal subunit protein mL49 (166 aa).

Positions 56–78 (RIPDPPKHEHYPTPSGWQPPRDP) are disordered.

Belongs to the mitochondrion-specific ribosomal protein mL49 family. Component of the mitochondrial large ribosomal subunit (mt-LSU). Mature mammalian 55S mitochondrial ribosomes consist of a small (28S) and a large (39S) subunit. The 28S small subunit contains a 12S ribosomal RNA (12S mt-rRNA) and 30 different proteins. The 39S large subunit contains a 16S rRNA (16S mt-rRNA), a copy of mitochondrial valine transfer RNA (mt-tRNA(Val)), which plays an integral structural role, and 52 different proteins. Interacts with OXA1L. As to expression, ubiquitous.

The protein localises to the mitochondrion. This is Large ribosomal subunit protein mL49 (MRPL49) from Homo sapiens (Human).